Reading from the N-terminus, the 212-residue chain is Ribosomal RNA small subunit methyltransferase G (212 aa).

S-adenosyl-L-methionine contacts are provided by residues Gly-80, Leu-85, 131 to 132 (AE), and Arg-146.

It belongs to the methyltransferase superfamily. RNA methyltransferase RsmG family.

It is found in the cytoplasm. The catalysed reaction is guanosine(527) in 16S rRNA + S-adenosyl-L-methionine = N(7)-methylguanosine(527) in 16S rRNA + S-adenosyl-L-homocysteine. In terms of biological role, specifically methylates the N7 position of guanine in position 527 of 16S rRNA. This chain is Ribosomal RNA small subunit methyltransferase G, found in Xanthomonas oryzae pv. oryzae (strain MAFF 311018).